The chain runs to 88 residues: MHRGYALVVCSPGVTRTMIDIDDDLLARAAKELGTTTKKDTVHAALRAALRASAARSLMNRMAENATGTQDEALVNAMWRDGHPENTA.

Antitoxin component of a type II toxin-antitoxin (TA) system. The polypeptide is Antitoxin VapB21 (vapB21) (Mycobacterium tuberculosis (strain CDC 1551 / Oshkosh)).